The sequence spans 588 residues: Probable G-protein coupled receptor 162 (588 aa).

At 1–17 the chain is on the extracellular side; that stretch reads MARGGLGAEEASLRSNA. The helical transmembrane segment at 18-38 threads the bilayer; that stretch reads LSWLACGLLALLANAWIILSI. Residues 39–49 are Cytoplasmic-facing; sequence SAKQQKHKPLE. A helical transmembrane segment spans residues 50-70; it reads LLLCFLAGTHILMAAVPLTTF. At 71 to 91 the chain is on the extracellular side; sequence AVVQLRRQASSDYDWNESICK. Asn86 carries an N-linked (GlcNAc...) asparagine glycan. Residues 92–112 form a helical membrane-spanning segment; the sequence is VFVSTYYTLALATCFTVASLS. The Cytoplasmic segment spans residues 113–133; it reads YHRMWMVRWPVNYRLSNAKKQ. A helical membrane pass occupies residues 134–154; sequence ALHAVMGIWMVSFILSTLPSI. Over 155 to 174 the chain is Extracellular; it reads GWHNNGERYYARGCQFIVSK. Residues 175–195 traverse the membrane as a helical segment; it reads IGLGFGVCFSLLLLGGIVMGL. At 196 to 275 the chain is on the cytoplasmic side; sequence VCVAITFYQT…SLQVTNLVSA (80 aa). Residues 276-296 traverse the membrane as a helical segment; the sequence is IVFLYDSLTGVPILVVSFFSL. Residues 297 to 303 lie on the Extracellular side of the membrane; sequence KSDSAPP. Residues 304-324 form a helical membrane-spanning segment; that stretch reads WMVLAVLWCSMAQTLLLPSFI. The Cytoplasmic portion of the chain corresponds to 325 to 588; the sequence is WSCERYRADV…GNPIFPQLTL (264 aa). Phosphoserine is present on residues Ser413 and Ser435. 2 disordered regions span residues 511–545 and 561–588; these read ETPL…SPDS and SLTG…QLTL. The span at 514-525 shows a compositional bias: pro residues; it reads LPSPTASPGPSP. The span at 530–540 shows a compositional bias: low complexity; sequence PLGFSPRRLSL.

The protein belongs to the G-protein coupled receptor 1 family.

It localises to the cell membrane. Orphan receptor. The protein is Probable G-protein coupled receptor 162 (Gpr162) of Mus musculus (Mouse).